Here is a 293-residue protein sequence, read N- to C-terminus: N-acetylneuraminate lyase (293 aa).

Ser48 and Ser49 together coordinate aceneuramate. The active-site Proton donor is the Tyr137. The active-site Schiff-base intermediate with substrate is Lys165. Aceneuramate-binding residues include Thr167, Gly189, Asp191, Glu192, and Ser208.

Belongs to the DapA family. NanA subfamily. As to quaternary structure, homotetramer.

The protein resides in the cytoplasm. It catalyses the reaction aceneuramate = aldehydo-N-acetyl-D-mannosamine + pyruvate. It participates in amino-sugar metabolism; N-acetylneuraminate degradation; D-fructose 6-phosphate from N-acetylneuraminate: step 1/5. Catalyzes the reversible aldol cleavage of N-acetylneuraminic acid (sialic acid; Neu5Ac) to form pyruvate and N-acetylmannosamine (ManNAc) via a Schiff base intermediate. In Staphylococcus aureus (strain Mu3 / ATCC 700698), this protein is N-acetylneuraminate lyase.